The primary structure comprises 743 residues: Phosphoribosylformylglycinamidine synthase subunit PurL (743 aa).

Histidine 50 is a catalytic residue. The ATP site is built by tyrosine 53 and lysine 92. Glutamate 94 contributes to the Mg(2+) binding site. Substrate contacts are provided by residues 95–98 (SHNH) and arginine 117. The active-site Proton acceptor is histidine 96. Position 118 (aspartate 118) interacts with Mg(2+). Glutamine 241 contributes to the substrate binding site. Aspartate 269 provides a ligand contact to Mg(2+). A substrate-binding site is contributed by 313–315 (ESQ). ATP-binding residues include aspartate 494 and glycine 531. Asparagine 532 contacts Mg(2+). Serine 534 serves as a coordination point for substrate.

It belongs to the FGAMS family. Monomer. Part of the FGAM synthase complex composed of 1 PurL, 1 PurQ and 2 PurS subunits.

The protein localises to the cytoplasm. The catalysed reaction is N(2)-formyl-N(1)-(5-phospho-beta-D-ribosyl)glycinamide + L-glutamine + ATP + H2O = 2-formamido-N(1)-(5-O-phospho-beta-D-ribosyl)acetamidine + L-glutamate + ADP + phosphate + H(+). Its pathway is purine metabolism; IMP biosynthesis via de novo pathway; 5-amino-1-(5-phospho-D-ribosyl)imidazole from N(2)-formyl-N(1)-(5-phospho-D-ribosyl)glycinamide: step 1/2. Part of the phosphoribosylformylglycinamidine synthase complex involved in the purines biosynthetic pathway. Catalyzes the ATP-dependent conversion of formylglycinamide ribonucleotide (FGAR) and glutamine to yield formylglycinamidine ribonucleotide (FGAM) and glutamate. The FGAM synthase complex is composed of three subunits. PurQ produces an ammonia molecule by converting glutamine to glutamate. PurL transfers the ammonia molecule to FGAR to form FGAM in an ATP-dependent manner. PurS interacts with PurQ and PurL and is thought to assist in the transfer of the ammonia molecule from PurQ to PurL. This Sinorhizobium medicae (strain WSM419) (Ensifer medicae) protein is Phosphoribosylformylglycinamidine synthase subunit PurL.